The primary structure comprises 155 residues: Ribosomal RNA large subunit methyltransferase H (155 aa).

S-adenosyl-L-methionine-binding positions include Leu73, Gly104, and 123–128; that span reads LSRMTF.

This sequence belongs to the RNA methyltransferase RlmH family. Homodimer.

It localises to the cytoplasm. It catalyses the reaction pseudouridine(1915) in 23S rRNA + S-adenosyl-L-methionine = N(3)-methylpseudouridine(1915) in 23S rRNA + S-adenosyl-L-homocysteine + H(+). In terms of biological role, specifically methylates the pseudouridine at position 1915 (m3Psi1915) in 23S rRNA. In Methylococcus capsulatus (strain ATCC 33009 / NCIMB 11132 / Bath), this protein is Ribosomal RNA large subunit methyltransferase H.